The primary structure comprises 641 residues: Macrolide export ATP-binding/permease protein MacB (641 aa).

The region spanning 2–236 is the ABC transporter domain; that stretch reads IFLKNICKNI…LTLKTMSKEK (235 aa). 34 to 41 is an ATP binding site; the sequence is GQSGSGKT. 4 helical membrane passes run 265-285, 519-539, 571-591, and 604-624; these read ILTMLGIIIGIASVVCVVALG, ACVAVIALIVGGIGVMNIMLV, MICTIGAILGVILSIFVIFAF, and AYSVLLGLLSSMFIGVVFGFF.

Belongs to the ABC transporter superfamily. Macrolide exporter (TC 3.A.1.122) family. Homodimer.

Its subcellular location is the cell inner membrane. Its function is as follows. Non-canonical ABC transporter that contains transmembrane domains (TMD), which form a pore in the inner membrane, and an ATP-binding domain (NBD), which is responsible for energy generation. Confers resistance against macrolides. The chain is Macrolide export ATP-binding/permease protein MacB from Campylobacter jejuni subsp. jejuni serotype O:23/36 (strain 81-176).